The primary structure comprises 137 residues: Large ribosomal subunit protein uL16 (137 aa).

It belongs to the universal ribosomal protein uL16 family. Part of the 50S ribosomal subunit.

Functionally, binds 23S rRNA and is also seen to make contacts with the A and possibly P site tRNAs. The chain is Large ribosomal subunit protein uL16 from Streptococcus agalactiae serotype Ia (strain ATCC 27591 / A909 / CDC SS700).